A 332-amino-acid polypeptide reads, in one-letter code: Succinylglutamate desuccinylase (332 aa).

Zn(2+) contacts are provided by histidine 59, glutamate 62, and histidine 151. Glutamate 215 is an active-site residue.

The protein belongs to the AspA/AstE family. Succinylglutamate desuccinylase subfamily. The cofactor is Zn(2+).

The enzyme catalyses N-succinyl-L-glutamate + H2O = L-glutamate + succinate. It functions in the pathway amino-acid degradation; L-arginine degradation via AST pathway; L-glutamate and succinate from L-arginine: step 5/5. Transforms N(2)-succinylglutamate into succinate and glutamate. This is Succinylglutamate desuccinylase from Pseudomonas paraeruginosa (strain DSM 24068 / PA7) (Pseudomonas aeruginosa (strain PA7)).